Here is a 304-residue protein sequence, read N- to C-terminus: Methionyl-tRNA formyltransferase (304 aa).

Residue 110 to 113 (SLLP) coordinates (6S)-5,6,7,8-tetrahydrofolate.

This sequence belongs to the Fmt family.

It catalyses the reaction L-methionyl-tRNA(fMet) + (6R)-10-formyltetrahydrofolate = N-formyl-L-methionyl-tRNA(fMet) + (6S)-5,6,7,8-tetrahydrofolate + H(+). Attaches a formyl group to the free amino group of methionyl-tRNA(fMet). The formyl group appears to play a dual role in the initiator identity of N-formylmethionyl-tRNA by promoting its recognition by IF2 and preventing the misappropriation of this tRNA by the elongation apparatus. The polypeptide is Methionyl-tRNA formyltransferase (Sulfurovum sp. (strain NBC37-1)).